The primary structure comprises 414 residues: Dual-specificity RNA methyltransferase RlmN (414 aa).

The span at 1 to 13 (MTSAVGISVPNTD) shows a compositional bias: polar residues. A disordered region spans residues 1-22 (MTSAVGISVPNTDAQSSQSASQ). Glutamate 124 (proton acceptor) is an active-site residue. Residues 134–377 (TGSRKTLCIS…CTIRQTRGDD (244 aa)) form the Radical SAM core domain. A disulfide bridge connects residues cysteine 141 and cysteine 382. [4Fe-4S] cluster-binding residues include cysteine 148, cysteine 152, and cysteine 155. S-adenosyl-L-methionine-binding positions include 204-205 (GE), serine 236, 258-260 (SLH), and asparagine 339. The active-site S-methylcysteine intermediate is cysteine 382.

Belongs to the radical SAM superfamily. RlmN family. [4Fe-4S] cluster is required as a cofactor.

It is found in the cytoplasm. The enzyme catalyses adenosine(2503) in 23S rRNA + 2 reduced [2Fe-2S]-[ferredoxin] + 2 S-adenosyl-L-methionine = 2-methyladenosine(2503) in 23S rRNA + 5'-deoxyadenosine + L-methionine + 2 oxidized [2Fe-2S]-[ferredoxin] + S-adenosyl-L-homocysteine. It catalyses the reaction adenosine(37) in tRNA + 2 reduced [2Fe-2S]-[ferredoxin] + 2 S-adenosyl-L-methionine = 2-methyladenosine(37) in tRNA + 5'-deoxyadenosine + L-methionine + 2 oxidized [2Fe-2S]-[ferredoxin] + S-adenosyl-L-homocysteine. Functionally, specifically methylates position 2 of adenine 2503 in 23S rRNA and position 2 of adenine 37 in tRNAs. m2A2503 modification seems to play a crucial role in the proofreading step occurring at the peptidyl transferase center and thus would serve to optimize ribosomal fidelity. This is Dual-specificity RNA methyltransferase RlmN from Acinetobacter baylyi (strain ATCC 33305 / BD413 / ADP1).